The following is a 476-amino-acid chain: Argininosuccinate lyase (476 aa).

The protein belongs to the lyase 1 family. Argininosuccinate lyase subfamily.

It is found in the cytoplasm. The catalysed reaction is 2-(N(omega)-L-arginino)succinate = fumarate + L-arginine. It functions in the pathway amino-acid biosynthesis; L-arginine biosynthesis; L-arginine from L-ornithine and carbamoyl phosphate: step 3/3. This is Argininosuccinate lyase from Thermobifida fusca (strain YX).